A 129-amino-acid polypeptide reads, in one-letter code: Ribonuclease P protein component (129 aa).

The protein belongs to the RnpA family. As to quaternary structure, consists of a catalytic RNA component (M1 or rnpB) and a protein subunit.

It catalyses the reaction Endonucleolytic cleavage of RNA, removing 5'-extranucleotides from tRNA precursor.. Its function is as follows. RNaseP catalyzes the removal of the 5'-leader sequence from pre-tRNA to produce the mature 5'-terminus. It can also cleave other RNA substrates such as 4.5S RNA. The protein component plays an auxiliary but essential role in vivo by binding to the 5'-leader sequence and broadening the substrate specificity of the ribozyme. The protein is Ribonuclease P protein component of Prochlorococcus marinus (strain MIT 9515).